The following is a 484-amino-acid chain: Serine hydroxymethyltransferase, cytosolic (484 aa).

N-acetylalanine is present on alanine 2. Asparagine 6 bears the Deamidated asparagine; alternate mark. Residues 6 to 7 (NG) constitute a cross-link (isoaspartyl glycine isopeptide (Asn-Gly); alternate). Cysteine 204 functions as the Nucleophile in the catalytic mechanism. The Proton donor role is filled by histidine 256. N6-(pyridoxal phosphate)lysine is present on lysine 257.

The protein belongs to the SHMT family. Homotetramer. Identified in complex with ABRAXAS2 and the other subunits of the BRISC complex, at least composed of ABRAXAS2, BRCC3/BRCC36, BABAM2 and BABAM1/NBA1. It depends on pyridoxal 5'-phosphate as a cofactor. In terms of processing, deamidation of asparagine produces alternatively aspartate or isoaspartate, which in turn can be converted to aspartate through carboxylmethylation/demethylation.

Its subcellular location is the cytoplasm. It catalyses the reaction (6R)-5,10-methylene-5,6,7,8-tetrahydrofolate + glycine + H2O = (6S)-5,6,7,8-tetrahydrofolate + L-serine. The protein operates within one-carbon metabolism; tetrahydrofolate interconversion. Interconversion of serine and glycine. This is Serine hydroxymethyltransferase, cytosolic (SHMT1) from Oryctolagus cuniculus (Rabbit).